The primary structure comprises 274 residues: Penicillin-insensitive murein endopeptidase (274 aa).

The N-terminal stretch at 1 to 19 is a signal peptide; the sequence is MKKTAIALLAWFVSSASLA. 3 disulfide bridges follow: Cys-44/Cys-265, Cys-187/Cys-235, and Cys-216/Cys-223. Zn(2+)-binding residues include His-110, His-113, Asp-120, Asp-147, His-150, and His-211. The interval 225-274 is disordered; it reads DQPLPPPGDGCGAELQSWFEPPKPGTTKPEKKTPPPLPPSCQALLDEHVL.

This sequence belongs to the peptidase M74 family. Dimer. The cofactor is Zn(2+).

The protein resides in the periplasm. Functionally, murein endopeptidase that cleaves the D-alanyl-meso-2,6-diamino-pimelyl amide bond that connects peptidoglycan strands. Likely plays a role in the removal of murein from the sacculus. The chain is Penicillin-insensitive murein endopeptidase from Salmonella heidelberg (strain SL476).